Here is a 367-residue protein sequence, read N- to C-terminus: 3-dehydroquinate synthase (367 aa).

NAD(+) contacts are provided by residues 72–77 (DGENYK), 106–110 (GVIGD), 130–131 (TT), Lys-143, Lys-152, and 170–173 (FLST). Zn(2+) contacts are provided by Glu-185, His-248, and His-265.

It belongs to the sugar phosphate cyclases superfamily. Dehydroquinate synthase family. Co(2+) is required as a cofactor. The cofactor is Zn(2+). NAD(+) serves as cofactor.

Its subcellular location is the cytoplasm. It catalyses the reaction 7-phospho-2-dehydro-3-deoxy-D-arabino-heptonate = 3-dehydroquinate + phosphate. It functions in the pathway metabolic intermediate biosynthesis; chorismate biosynthesis; chorismate from D-erythrose 4-phosphate and phosphoenolpyruvate: step 2/7. Functionally, catalyzes the conversion of 3-deoxy-D-arabino-heptulosonate 7-phosphate (DAHP) to dehydroquinate (DHQ). The chain is 3-dehydroquinate synthase from Buchnera aphidicola subsp. Cinara cedri (strain Cc).